A 485-amino-acid chain; its full sequence is MHAFLGNAQLPSTPRGDRLEFSEWYAEVLRSAEIMDVRYPVKGMYVWLPYGFEIRQRVVEKLRRKLRETGHEEVLFPTLIPETQLKKESEHIAGFEDEVYWVTHGGLKELDEKLALRPTSETAIYPMFALWIRSHADLPLKIFQIVNTFRYETKHTRPLIRMREITTFKEAHTAHATEEEAEEQVKEAVEIYSSFFDELGIPYIASVRPEWDKFPGAEYTVAFDTLMPDGRTLQIGTVHMLGQNFARTFEVTYETEEGDQEYVYMTCYGISDRVVASMIAIHGDERGLVLPPDVAPYQVVMVPILKKGVRRKILERAAEVEEMLREEGVRVKVDDRDMSPGRKFHYWELKGVPLRIELGARELEEGTAVVFRRDELERETYAFEELPDVVPELLEDIAMELRKRAREKFEKGIFRTDSPEEARRLVGEGIVETGWCGSERCGVRMEEEFGGDVLGTPYPEEDTEFERCPICGETAEYTVRIAKTY.

This sequence belongs to the class-II aminoacyl-tRNA synthetase family. ProS type 3 subfamily. In terms of assembly, homodimer.

It is found in the cytoplasm. It carries out the reaction tRNA(Pro) + L-proline + ATP = L-prolyl-tRNA(Pro) + AMP + diphosphate. Catalyzes the attachment of proline to tRNA(Pro) in a two-step reaction: proline is first activated by ATP to form Pro-AMP and then transferred to the acceptor end of tRNA(Pro). The protein is Proline--tRNA ligase of Methanopyrus kandleri (strain AV19 / DSM 6324 / JCM 9639 / NBRC 100938).